A 359-amino-acid chain; its full sequence is 4-galactosyl-N-acetylglucosaminide 3-alpha-L-fucosyltransferase 9 (359 aa).

Over 1–11 (MTSTSKGILRP) the chain is Cytoplasmic. The helical; Signal-anchor for type II membrane protein transmembrane segment at 12–32 (FLIVCIILGCFVACLLIYIKP) threads the bilayer. The Lumenal segment spans residues 33–359 (TNSWVFSPME…VGNLEKWFWN (327 aa)). N62 is a glycosylation site (N-linked (GlcNAc...) asparagine). The interval 63 to 168 (ETTILVWVWP…RRDSDIQVPY (106 aa)) is acceptor-binding. Q75 contributes to the a beta-D-galactosyl-(1-&gt;4)-N-acetyl-beta-D-glucosaminyl derivative binding site. 3 disulfides stabilise this stretch: C82–C335, C91–C338, and C190–C238. N-linked (GlcNAc...) asparagine glycosylation occurs at N101. An a beta-D-galactosyl-(1-&gt;4)-N-acetyl-beta-D-glucosaminyl derivative-binding site is contributed by E137. The active-site Nucleophile is E137. Position 137 (E137) interacts with GDP-beta-L-fucose. N153 carries N-linked (GlcNAc...) asparagine glycosylation. GDP-beta-L-fucose-binding residues include Y168, V192, S194, N195, R202, V226, Y241, N246, Y252, E255, and K256. Positions 169–326 (GFLTVSTSPF…NWRKDFTVNL (158 aa)) are donor-binding. The segment at 327–359 (PRFWESHACLACDHVKRHQEYKSVGNLEKWFWN) is acceptor-binding.

This sequence belongs to the glycosyltransferase 10 family. In terms of assembly, homodimer. N-glycosylated with complex-type N-glycans.

It localises to the golgi apparatus. It is found in the trans-Golgi network membrane. Its subcellular location is the golgi apparatus membrane. It catalyses the reaction a beta-D-galactosyl-(1-&gt;4)-N-acetyl-beta-D-glucosaminyl derivative + GDP-beta-L-fucose = a beta-D-galactosyl-(1-&gt;4)-[alpha-L-fucosyl-(1-&gt;3)]-N-acetyl-beta-D-glucosaminyl derivative + GDP + H(+). It carries out the reaction an alpha-Neu5Ac-(2-&gt;3)-beta-D-Gal-(1-&gt;4)-beta-D-GlcNAc-(1-&gt;3)-beta-D-Gal-(1-&gt;4)-beta-D-GlcNAc derivative + GDP-beta-L-fucose = an alpha-Neu5Ac-(2-&gt;3)-beta-D-Gal-(1-&gt;4)-beta-D-GlcNAc-(1-&gt;3)-beta-D-Gal-(1-&gt;4)-[alpha-L-Fuc-(1-&gt;3)]-beta-D-GlcNAc derivative + GDP + H(+). The catalysed reaction is alpha-N-glycoloylneuraminosyl-(2-&gt;3)-beta-D-galactosyl-(1-&gt;4)-N-acetyl-beta-D-glucosaminyl-(1-&gt;3)-beta-D-galactosyl-(1-&gt;4)-N-acetyl-beta-D-glucosaminyl-(1-&gt;3)-beta-D-galactosyl-(1-&gt;4)-beta-D-glucosyl-(1&lt;-&gt;1')-ceramide + GDP-beta-L-fucose = alpha-N-glycoloylneuraminosyl-(2-&gt;3)-beta-D-galactosyl-(1-&gt;4)-N-acetyl-beta-D-glucosaminyl-(1-&gt;3)-beta-D-galactosyl-(1-&gt;4)-[alpha-L-fucosyl-(1-&gt;3)]-N-acetyl-beta-D-glucosaminyl-(1-&gt;3)-beta-D-galactosyl-(1-&gt;4)-beta-D-glucosyl-(1&lt;-&gt;1')-ceramide + GDP + H(+). The enzyme catalyses alpha-D-galactosyl-(1-&gt;3)-beta-D-galactosyl-(1-&gt;4)-N-acetyl-beta-D-glucosaminyl-(1-&gt;3)-beta-D-galactosyl-(1-&gt;4)-beta-D-glucosyl-(1&lt;-&gt;1')-ceramide + GDP-beta-L-fucose = a neolactoside IV(3)-alpha-Gal,III(3)-alpha-Fuc-nLc4Cer + GDP + H(+). It catalyses the reaction a neolactoside nLc4Cer + GDP-beta-L-fucose = a neolactoside III(3)-alpha-Fuc-nLc4Cer + GDP + H(+). It carries out the reaction an N-acetyl-alpha-neuraminyl-(2-&gt;3)-beta-D-galactosyl-(1-&gt;4)-N-acetyl-beta-D-glucosaminyl derivative + GDP-beta-L-fucose = an alpha-Neu5Ac-(2-&gt;3)-beta-D-Gal-(1-&gt;4)-[alpha-L-Fuc-(1-&gt;3)]-beta-D-GlcNAc derivative + GDP + H(+). The catalysed reaction is beta-D-Gal-(1-&gt;4)-beta-D-GlcNAc-(1-&gt;3)-beta-D-Gal-(1-&gt;4)-D-Glc + GDP-beta-L-fucose = beta-D-Gal-(1-&gt;4)-[alpha-L-Fuc-(1-&gt;3)]-beta-D-GlcNAc-(1-&gt;3)-beta-D-Gal-(1-&gt;4)-D-Glc + GDP + H(+). The enzyme catalyses an alpha-L-Fuc-(1-&gt;2)-beta-D-Gal-(1-&gt;4)-beta-D-GlcNAc derivative + GDP-beta-L-fucose = an alpha-L-Fuc-(1-&gt;2)-beta-D-Gal-(1-&gt;4)-[alpha-L-Fuc-(1-&gt;3)]-beta-D-GlcNAc derivative + GDP + H(+). The protein operates within protein modification; protein glycosylation. It participates in glycolipid biosynthesis. Activated by Mn2+. Catalyzes alpha(1-&gt;3) linkage of fucosyl moiety transferred from GDP-beta-L-fucose to N-acetyl glucosamine (GlcNAc) within type 2 lactosamine (LacNAc, beta-D-Gal-(1-&gt;4)-beta-D-GlcNAc-) glycan attached to glycolipids and N- or O-linked glycoproteins. Fucosylates distal type 2 LacNAc and its fucosylated (H-type 2 LacNAc) and sialylated (sialyl-type 2 LacNAc) derivatives to form Lewis x (Lex) (CD15) and Lewis y (Ley) antigenic epitopes involved in cell adhesion and differentiation. Generates Lex epitopes in the brain, presumably playing a role in the maintenance of neuronal stemness and neurite outgrowth in progenitor neural cells. Fucosylates the internal type 2 LacNAc unit of the polylactosamine chain to form VIM-2 antigen that serves as recognition epitope for SELE. Can also modify milk oligosaccharides in particular type 2 tetrasaccharide LNnT. The sequence is that of 4-galactosyl-N-acetylglucosaminide 3-alpha-L-fucosyltransferase 9 from Rattus norvegicus (Rat).